Here is a 230-residue protein sequence, read N- to C-terminus: Sugar fermentation stimulation protein homolog (230 aa).

It belongs to the SfsA family.

This is Sugar fermentation stimulation protein homolog from Pelobacter propionicus (strain DSM 2379 / NBRC 103807 / OttBd1).